Here is a 209-residue protein sequence, read N- to C-terminus: uncharacterized protein (209 aa).

Disordered regions lie at residues 1 to 80 (MFVR…PPVE) and 164 to 197 (LPAGGAGEQEKEPVSRGSSRSSCSQRRPPPPGME). Residues 178-189 (SRGSSRSSCSQR) are compositionally biased toward low complexity.

This is an uncharacterized protein from Homo sapiens (Human).